Here is a 343-residue protein sequence, read N- to C-terminus: Flavonoid 4'-O-methyltransferase 4 (343 aa).

D211 provides a ligand contact to S-adenosyl-L-methionine. H249 functions as the Proton acceptor in the catalytic mechanism.

Belongs to the class I-like SAM-binding methyltransferase superfamily. Cation-independent O-methyltransferase family. In terms of assembly, homodimer.

The catalysed reaction is apigenin + S-adenosyl-L-methionine = acacetin + S-adenosyl-L-homocysteine + H(+). It carries out the reaction kaempferol + S-adenosyl-L-methionine = kaempferide + S-adenosyl-L-homocysteine + H(+). The enzyme catalyses isorhamnetin + S-adenosyl-L-methionine = 3',4'-O-dimethylquercetin + S-adenosyl-L-homocysteine + 2 H(+). It catalyses the reaction scutellarein + S-adenosyl-L-methionine = scutellarein 4'-methyl ether + S-adenosyl-L-homocysteine + H(+). The catalysed reaction is (2S)-naringenin + S-adenosyl-L-methionine = (2S)-naringenin 4'-methyl ether + S-adenosyl-L-homocysteine + H(+). It carries out the reaction 4',7,8-trihydroxyflavone + S-adenosyl-L-methionine = 7,8-dihydroxy-4'-methoxyflavone + S-adenosyl-L-homocysteine + H(+). The enzyme catalyses taxifolin + S-adenosyl-L-methionine = taxifolin 4'-methyl ether + S-adenosyl-L-homocysteine + H(+). The protein operates within flavonoid metabolism. Functionally, flavonoid 4'-O-methyltransferase involved in the biosynthesis of polymethoxylated flavonoids natural products such as pebrellin, aroma compounds which contribute to the flavor of peppermint, and exhibit pharmacological activities such as anti-allergic, anti-oxidant, antibacterial, anti-proliferative, and anti-inflammatory effects. Catalyzes S-adenosylmethionine-dependent regioselective 4'-O-methylation of flavonoids; active on various hydroxylated flavonoid substrates, including isorhamnetin, kaempferol, apigenin (API), scutellarein (6-hydroxy-apigenin, 6-OH-API, SCU), taxifolin, 7,8,4'-trihydroxy-flavone and naringenin (NAR), and, with a lower efficiency, quercetin, rhamnetin, luteolin (LUT) and 7,8,3',4'-tetrahydroxy-flavone. This is Flavonoid 4'-O-methyltransferase 4 from Mentha piperita (Peppermint).